The primary structure comprises 115 residues: Large ribosomal subunit protein bL20 (115 aa).

Belongs to the bacterial ribosomal protein bL20 family.

Its function is as follows. Binds directly to 23S ribosomal RNA and is necessary for the in vitro assembly process of the 50S ribosomal subunit. It is not involved in the protein synthesizing functions of that subunit. This is Large ribosomal subunit protein bL20 from Malacoplasma penetrans (strain HF-2) (Mycoplasma penetrans).